The following is a 161-amino-acid chain: Nucleotide-binding protein Shewmr4_3156 (161 aa).

This sequence belongs to the YajQ family.

In terms of biological role, nucleotide-binding protein. The protein is Nucleotide-binding protein Shewmr4_3156 of Shewanella sp. (strain MR-4).